Here is a 333-residue protein sequence, read N- to C-terminus: Acyl-CoA wax alcohol acyltransferase 2 (333 aa).

The next 3 membrane-spanning stretches (helical) occupy residues 15–35, 38–58, and 130–150; these read VFAVFQWSFSALLITTTVIAV, YLVVFTPYWPVTVLILTWLAF, and IFPGITPYILTLGAFFWMPFL.

This sequence belongs to the diacylglycerol acyltransferase family. In terms of assembly, monomer. In terms of tissue distribution, highly expressed in skin, where it is primarily restricted to undifferentiated peripheral sebocytes. Also expressed at lower level in other tissues except pancreas.

The protein resides in the endoplasmic reticulum membrane. The catalysed reaction is a long chain fatty alcohol + a fatty acyl-CoA = a wax ester + CoA. The enzyme catalyses all-trans-retinol + an acyl-CoA = an all-trans-retinyl ester + CoA. It carries out the reaction an acyl-CoA + a 1,2-diacyl-sn-glycerol = a triacyl-sn-glycerol + CoA. It catalyses the reaction 11-cis-retinol + a fatty acyl-CoA = 11-cis-retinyl ester + CoA. The catalysed reaction is 9-cis-retinol + a fatty acyl-CoA = 9-cis-retinyl ester + CoA. The enzyme catalyses 13-cis-retinol + a fatty acyl-CoA = 13-cis-retinyl ester + CoA. It carries out the reaction a 1-acylglycerol + an acyl-CoA = a 1,2-diacylglycerol + CoA. It catalyses the reaction 1-O-alkylglycerol + an acyl-CoA = 1-O-alkyl-3-acylglycerol + CoA. The catalysed reaction is a 2-acylglycerol + an acyl-CoA = a 1,2-diacyl-sn-glycerol + CoA. The enzyme catalyses 2-(9Z-octadecenoyl)-glycerol + hexadecanoyl-CoA = 1-hexadecanoyl-2-(9Z-octadecenoyl)-sn-glycerol + CoA. It carries out the reaction 1,2-di-(9Z-octadecenoyl)-sn-glycerol + hexadecanoyl-CoA = 1,2-di-(9Z)-octadecenoyl-3-hexadecanoyl-sn-glycerol + CoA. It catalyses the reaction hexadecan-1-ol + hexadecanoyl-CoA = hexadecanyl hexadecanoate + CoA. The catalysed reaction is hexadecane-1,2-diol + hexadecanoyl-CoA = 2-hydroxyhexadecyl hexadecanoate + CoA. The enzyme catalyses 9-cis-retinol + hexadecanoyl-CoA = 9-cis-retinyl hexadecanoate + CoA. It carries out the reaction all-trans-retinol + hexadecanoyl-CoA = all-trans-retinyl hexadecanoate + CoA. It catalyses the reaction 1,2-di-(9Z-octadecenoyl)-sn-glycerol + (9Z)-octadecenoyl-CoA = 1,2,3-tri-(9Z-octadecenoyl)-glycerol + CoA. The catalysed reaction is hexadecan-1-ol + (9Z)-octadecenoyl-CoA = hexadecanyl (9Z)-octadecenoate + CoA. The enzyme catalyses (9Z)-hexadecen-1-ol + (9Z)-octadecenoyl-CoA = 1-O-(9Z)-hexadecenyl (9Z)-octadecenoate + CoA. It carries out the reaction octadecan-1-ol + (9Z)-octadecenoyl-CoA = 1-O-octadecyl (9Z)-octadecenoate + CoA. It catalyses the reaction (9Z)-octadecen-1-ol + (9Z)-octadecenoyl-CoA = 1-O-(9Z)-octadecenyl (9Z)-octadecenoate + CoA. The catalysed reaction is hexadecan-1-ol + (9Z)-hexadecenoyl-CoA = 1-O-hexadecyl (9Z)-hexadecenoate + CoA. The enzyme catalyses hexadecan-1-ol + octadecanoyl-CoA = hexadecanyl octadecanoate + CoA. It carries out the reaction 11-cis-retinol + hexadecanoyl-CoA = 11-cis-retinyl hexadecanoate + CoA. It catalyses the reaction 1-O-(9Z-octadecenyl)-glycerol + (9Z)-octadecenoyl-CoA = 1-O-(9Z-octadecyl)-3-(9Z-octadecenoyl)-glycerol + CoA. The catalysed reaction is 1-(9Z-octadecenoyl)-glycerol + (9Z)-octadecenoyl-CoA = 1,2-di-(9Z-octadecenoyl)-glycerol + CoA. The enzyme catalyses 11-cis-retinol + tetradecanoyl-CoA = 11-cis-retinyl tetradecanoate + CoA. It carries out the reaction 9-cis-retinol + tetradecanoyl-CoA = 9-cis-retinyl tetradecanoate + CoA. It catalyses the reaction 13-cis-retinol + tetradecanoyl-CoA = 13-cis-retinyl tetradecanoate + CoA. The catalysed reaction is all-trans-retinol + tetradecanoyl-CoA = all-trans-retinyl tetradecanoate + CoA. The enzyme catalyses tetradecan-1-ol + tetradecanoyl-CoA = tetradecanyl tetradecanoate + CoA. Its activity is regulated as follows. 11-cis retinoids act as allosteric modulators of acyl-CoA retinol O-fatty-acyltransferase (ARAT) activity by suppressing esterification of 9-cis, 13-cis, or all-trans retinols concurrently increasing the enzyme specificity toward 11-cis isomer. Its function is as follows. Acyltransferase that catalyzes the formation of ester bonds between fatty alcohols and fatty acyl-CoAs to form wax monoesters. Shows a preference for medium chain acyl-CoAs from C12 to C16 in length and fatty alcohols shorter than C20, as the acyl donors and acceptors, respectively. Also possesses acyl-CoA retinol acyltransferase (ARAT) activity that preferentially esterifies 11-cis-retinol, a chromophore precursor of bleached opsin pigments in cone cells. Shows higher catalytic efficiency toward 11-cis-retinol versus 9-cis-retinol, 13-cis-retinol, and all-trans-retinol substrates. In Homo sapiens (Human), this protein is Acyl-CoA wax alcohol acyltransferase 2 (AWAT2).